The primary structure comprises 246 residues: Large ribosomal subunit protein uL3 (246 aa).

The residue at position 151 (Gln151) is an N5-methylglutamine.

The protein belongs to the universal ribosomal protein uL3 family. As to quaternary structure, part of the 50S ribosomal subunit. Forms a cluster with proteins L14 and L19. Methylated by PrmB.

Its function is as follows. One of the primary rRNA binding proteins, it binds directly near the 3'-end of the 23S rRNA, where it nucleates assembly of the 50S subunit. The protein is Large ribosomal subunit protein uL3 of Bartonella bacilliformis (strain ATCC 35685 / KC583 / Herrer 020/F12,63).